The chain runs to 299 residues: Tyrosine recombinase XerD (299 aa).

A Core-binding (CB) domain is found at 3–88; it reads QQDNPLIEQF…AMRRLFQYLY (86 aa). The Tyr recombinase domain maps to 109–293; that stretch reads RLPKDLSEAQ…ATERLRQLHQ (185 aa). Catalysis depends on residues Arg-149, Lys-173, His-245, Arg-248, and His-271. Tyr-280 (O-(3'-phospho-DNA)-tyrosine intermediate) is an active-site residue.

This sequence belongs to the 'phage' integrase family. XerD subfamily. Forms a cyclic heterotetrameric complex composed of two molecules of XerC and two molecules of XerD, in which XerC interacts with XerD via its C-terminal region, XerD interacts with XerC via its C-terminal region and so on.

The protein resides in the cytoplasm. FtsK may regulate the catalytic switch between XerC and XerD in the heterotetrameric complex during the two steps of the recombination process. In terms of biological role, site-specific tyrosine recombinase, which acts by catalyzing the cutting and rejoining of the recombining DNA molecules. Binds cooperatively to specific DNA consensus sequences that are separated from XerC binding sites by a short central region, forming the heterotetrameric XerC-XerD complex that recombines DNA substrates. The complex is essential to convert dimers of the bacterial chromosome into monomers to permit their segregation at cell division. It also contributes to the segregational stability of plasmids. In the complex XerD specifically exchanges the bottom DNA strands. In Yersinia pestis, this protein is Tyrosine recombinase XerD.